Here is a 197-residue protein sequence, read N- to C-terminus: MAIAPIRIVGDPVLHTPTAPVQVAADGSLPANLNGLISTMYDTMDAAHGVGLAANQIGYGLRVFVYDCAEDCRQTARRRGVVINPILETSEIPETMPDPDTDNEGCLSVPGESFPIGRAQWARVTGLDADGNPVTTEGTGLFARMLQHETGHLDGFLYLDYLIGRHARSAKRAIKSRHWGVPGLSWMPGEVPDPFGP.

2 residues coordinate Fe cation: Cys-106 and His-148. Residue Glu-149 is part of the active site. Residue His-152 participates in Fe cation binding.

It belongs to the polypeptide deformylase family. The cofactor is Fe(2+).

It carries out the reaction N-terminal N-formyl-L-methionyl-[peptide] + H2O = N-terminal L-methionyl-[peptide] + formate. Removes the formyl group from the N-terminal Met of newly synthesized proteins. Requires at least a dipeptide for an efficient rate of reaction. N-terminal L-methionine is a prerequisite for activity but the enzyme has broad specificity at other positions. This is Peptide deformylase from Mycobacterium leprae (strain TN).